The primary structure comprises 334 residues: Ornithine carbamoyltransferase (334 aa).

Carbamoyl phosphate is bound by residues 57-60, Gln84, Arg108, and 135-138; these read STRT and HPTQ. L-ornithine contacts are provided by residues Asn168, Asp232, and 236 to 237; that span reads SM. Carbamoyl phosphate contacts are provided by residues 274–275 and Arg321; that span reads CL.

It belongs to the aspartate/ornithine carbamoyltransferase superfamily. OTCase family.

It is found in the cytoplasm. The enzyme catalyses carbamoyl phosphate + L-ornithine = L-citrulline + phosphate + H(+). It functions in the pathway amino-acid biosynthesis; L-arginine biosynthesis; L-arginine from L-ornithine and carbamoyl phosphate: step 1/3. Its function is as follows. Reversibly catalyzes the transfer of the carbamoyl group from carbamoyl phosphate (CP) to the N(epsilon) atom of ornithine (ORN) to produce L-citrulline. This is Ornithine carbamoyltransferase from Actinobacillus pleuropneumoniae serotype 5b (strain L20).